Consider the following 445-residue polypeptide: Beclin-1 (445 aa).

Residues 103–122 carry the BH3 motif; it reads TMENLSRRLKVTGDLFDIMS. Residues 137 to 264 are a coiled coil; the sequence is DTLLDQLDTQ…QLDKLKKTNV (128 aa). The tract at residues 240–445 is evolutionary conserved domain (ECD); it reads DDLKSVENQM…AWVSSQFYNK (206 aa). Residues 420–445 are required for membrane-association; the sequence is WTKALKFMLTNLKWGLAWVSSQFYNK.

This sequence belongs to the beclin family. As to quaternary structure, component of the PI3K (PI3KC3/PI3K-III/class III phosphatidylinositol 3-kinase) complex. Post-translationally, may be proteolytically processed by caspases; the C-terminal fragment(s) may induce apoptosis.

It localises to the cytoplasm. The protein localises to the golgi apparatus. The protein resides in the trans-Golgi network membrane. Its subcellular location is the endosome membrane. It is found in the endoplasmic reticulum membrane. It localises to the mitochondrion membrane. The protein localises to the cytoplasmic vesicle. The protein resides in the autophagosome. In terms of biological role, plays a central role in autophagy. Acts as core subunit of different PI3K complex forms that mediate formation of phosphatidylinositol 3-phosphate and are believed to play a role in multiple membrane trafficking pathways: PI3KC3-C1 is involved in initiation of autophagosomes and PI3KC3-C2 in maturation of autophagosomes and endocytosis. Involved in regulation of degradative endocytic trafficking and required for the abscission step in cytokinesis, probably in the context of PI3KC3-C2. Essential for the formation of PI3KC3-C2 but not PI3KC3-C1 PI3K complex forms. Involved in endocytosis including endosome formation in neuronal cells. This chain is Beclin-1 (becn1), found in Xenopus laevis (African clawed frog).